The following is a 363-amino-acid chain: Cyanuric acid amidohydrolase (363 aa).

Residues Met-1–Asp-104 form an RU A region. Residues Arg-52 and Ser-83 to Gly-84 each bind substrate. The RU B stretch occupies residues Arg-112–Glu-249. Residue Lys-162 is part of the active site. Residues Arg-194 and Ser-232 to Ala-233 each bind substrate. The active-site Nucleophile is Ser-232. Positions Leu-255–Ala-363 are RU C. Glu-297 lines the Mg(2+) pocket. Substrate is bound by residues Arg-324 and Ser-343–Gly-344. Residues Ala-346, Gln-349, Gly-350, Pro-351, and Gly-354 each coordinate Mg(2+).

It belongs to the cyclic amide hydrolase (CyAH) family. In terms of assembly, homotetramer.

The enzyme catalyses cyanurate + H2O = 1-carboxybiuret + H(+). It participates in xenobiotic degradation; atrazine degradation; biuret from cyanurate: step 1/1. Inhibited by barbituric acid. Responsible for the hydrolysis of cyanuric acid, an intermediate formed during catabolism of s-triazine based compounds in herbicides such as atrazine and polymers such as melamine. Catalyzes the hydrolytic opening of the s-triazine ring of cyanuric acid (2,4,6-trihydroxy-s-triazine) to yield carbon dioxide and carboxybiuret, which spontaneously decarboxylates to biuret. The chain is Cyanuric acid amidohydrolase (atzD) from Pseudomonas sp. (strain ADP).